Here is a 353-residue protein sequence, read N- to C-terminus: Protein RecA (353 aa).

67–74 is a binding site for ATP; sequence GPESSGKT.

This sequence belongs to the RecA family.

The protein localises to the cytoplasm. Can catalyze the hydrolysis of ATP in the presence of single-stranded DNA, the ATP-dependent uptake of single-stranded DNA by duplex DNA, and the ATP-dependent hybridization of homologous single-stranded DNAs. It interacts with LexA causing its activation and leading to its autocatalytic cleavage. The chain is Protein RecA from Salmonella paratyphi A (strain ATCC 9150 / SARB42).